A 347-amino-acid polypeptide reads, in one-letter code: Elongation factor Ts (347 aa).

Residues 80 to 83 (TDFV) form an involved in Mg(2+) ion dislocation from EF-Tu region.

Belongs to the EF-Ts family.

It is found in the cytoplasm. Its function is as follows. Associates with the EF-Tu.GDP complex and induces the exchange of GDP to GTP. It remains bound to the aminoacyl-tRNA.EF-Tu.GTP complex up to the GTP hydrolysis stage on the ribosome. This Streptococcus sanguinis (strain SK36) protein is Elongation factor Ts.